The following is a 190-amino-acid chain: Dual specificity protein phosphatase 21 (190 aa).

In terms of domain architecture, Tyrosine-protein phosphatase spans 21–162 (SFSQITRSLF…LINYEFKLFN (142 aa)). The interval 43 to 128 (LSSNRITAIV…AYLMKYHSMS (86 aa)) is sufficient for mitochondrial localization. C106 (phosphocysteine intermediate) is an active-site residue.

The protein belongs to the protein-tyrosine phosphatase family. Non-receptor class dual specificity subfamily. Microtubule inner protein component of sperm flagellar doublet microtubules. In terms of tissue distribution, expressed in testis.

The protein localises to the cytoplasm. It is found in the nucleus. It localises to the mitochondrion inner membrane. Its subcellular location is the cytoskeleton. The protein resides in the flagellum axoneme. The enzyme catalyses O-phospho-L-tyrosyl-[protein] + H2O = L-tyrosyl-[protein] + phosphate. It carries out the reaction O-phospho-L-seryl-[protein] + H2O = L-seryl-[protein] + phosphate. It catalyses the reaction O-phospho-L-threonyl-[protein] + H2O = L-threonyl-[protein] + phosphate. In terms of biological role, protein phosphatase component of the sperm flagellar doublet microtubules. May act as a regulator of sperm motility by mediating dephosphorylation of sperm doublet microtubule proteins. Can dephosphorylate single and diphosphorylated synthetic MAPK peptides, with preference for the phosphotyrosine and diphosphorylated forms over phosphothreonine. This chain is Dual specificity protein phosphatase 21 (DUSP21), found in Homo sapiens (Human).